A 288-amino-acid polypeptide reads, in one-letter code: THO complex subunit 4D (288 aa).

The interval 1–55 is disordered; that stretch reads MSGALNMTLDEIVKRGKTARSGGRGISRGRGRGRGGGGRGAGPARRGPLAVNARP. N-acetylserine is present on S2. The 78-residue stretch at 93–170 folds into the RRM domain; the sequence is TRLHVTNLDQ…RPMRLEILGG (78 aa). Residues 201 to 288 are disordered; it reads QGGGGRGRVR…SYHADAMNTS (88 aa). Positions 232 to 260 are enriched in gly residues; the sequence is QGGGMRGGRGGFRARGRGNGGRGRGGGRG. The span at 264–281 shows a compositional bias: basic and acidic residues; the sequence is KPVEKSAADLDKDLESYH.

Belongs to the ALYREF family. As to quaternary structure, interacts with PARP1. Interacts with EIF4A3.

Its subcellular location is the nucleus. It localises to the nucleoplasm. The protein localises to the nucleolus. Its function is as follows. Export adapter involved in nuclear export of spliced and unspliced mRNA. Plays a role in disease resistance. Mediates multiple defense responses triggered by NEP1, including stomatal closure, hypersensitive cell death (HCD) and defense-related gene expression. The chain is THO complex subunit 4D from Arabidopsis thaliana (Mouse-ear cress).